A 323-amino-acid chain; its full sequence is GTP 3',8-cyclase (323 aa).

The 223-residue stretch at 4 to 226 (TFQRQINYLR…LEPFPDLATN (223 aa)) folds into the Radical SAM core domain. Residue Arg-13 coordinates GTP. Cys-20 and Cys-24 together coordinate [4Fe-4S] cluster. Tyr-26 lines the S-adenosyl-L-methionine pocket. Cys-27 lines the [4Fe-4S] cluster pocket. Residue Arg-63 coordinates GTP. Gly-67 contributes to the S-adenosyl-L-methionine binding site. Thr-94 lines the GTP pocket. Ser-118 contacts S-adenosyl-L-methionine. A GTP-binding site is contributed by Lys-155. Met-189 serves as a coordination point for S-adenosyl-L-methionine. Positions 252 and 255 each coordinate [4Fe-4S] cluster. 257–259 (RLR) lines the GTP pocket. Cys-269 provides a ligand contact to [4Fe-4S] cluster.

It belongs to the radical SAM superfamily. MoaA family. In terms of assembly, monomer and homodimer. The cofactor is [4Fe-4S] cluster.

The enzyme catalyses GTP + AH2 + S-adenosyl-L-methionine = (8S)-3',8-cyclo-7,8-dihydroguanosine 5'-triphosphate + 5'-deoxyadenosine + L-methionine + A + H(+). It functions in the pathway cofactor biosynthesis; molybdopterin biosynthesis. In terms of biological role, catalyzes the cyclization of GTP to (8S)-3',8-cyclo-7,8-dihydroguanosine 5'-triphosphate. This is GTP 3',8-cyclase from Moorella thermoacetica (strain ATCC 39073 / JCM 9320).